We begin with the raw amino-acid sequence, 202 residues long: IMP cyclohydrolase (202 aa).

It belongs to the archaeal IMP cyclohydrolase family.

The catalysed reaction is IMP + H2O = 5-formamido-1-(5-phospho-D-ribosyl)imidazole-4-carboxamide. The protein operates within purine metabolism; IMP biosynthesis via de novo pathway; IMP from 5-formamido-1-(5-phospho-D-ribosyl)imidazole-4-carboxamide: step 1/1. Functionally, catalyzes the cyclization of 5-formylamidoimidazole-4-carboxamide ribonucleotide to IMP. The chain is IMP cyclohydrolase (purO) from Methanocaldococcus jannaschii (strain ATCC 43067 / DSM 2661 / JAL-1 / JCM 10045 / NBRC 100440) (Methanococcus jannaschii).